The sequence spans 995 residues: KN motif and ankyrin repeat domain-containing protein 4 (995 aa).

2 disordered regions span residues 1–29 (MEKT…SVET) and 68–127 (TLPR…EVSY). The segment covering 101 to 124 (LGTQEQNQSPPLGNAPQASTSRSE) has biased composition (polar residues). Residues 343–404 (SSLKQQVSAL…EGQFHQENAK (62 aa)) are a coiled coil. Disordered stretches follow at residues 443 to 467 (ESWG…GNQS), 503 to 558 (EAGT…PTDA), 617 to 642 (QAHP…TSLK), 663 to 705 (LQFV…PDHK), and 721 to 740 (PEGT…VPHS). Positions 511–523 (GPQGGTRGAGGFL) are enriched in gly residues. The span at 526–549 (SDRKTPPAGREETSSNLPGKEHPG) shows a compositional bias: basic and acidic residues. Over residues 625 to 640 (PASSSSPPVEISPSTS) the composition is skewed to low complexity. Over residues 680-693 (TSGEDSTPEDLSDS) the composition is skewed to acidic residues. The span at 694 to 705 (EAEKKCDGPDHK) shows a compositional bias: basic and acidic residues. ANK repeat units lie at residues 823-853 (NGNT…NVDH), 862-890 (VMIT…NVNI), 895-924 (GGQT…DVNL), 928-958 (DGSS…DSSL), and 962-992 (AGRT…QGRS).

In terms of tissue distribution, strongly expressed in colon, liver, lung, skeletal muscle and kidney.

Its subcellular location is the cytoplasm. In terms of biological role, may be involved in the control of cytoskeleton formation by regulating actin polymerization. This Homo sapiens (Human) protein is KN motif and ankyrin repeat domain-containing protein 4 (KANK4).